The sequence spans 367 residues: Protein RIC-3 (367 aa).

Residues 1-31 (MAYSTVQRVALASGLVLAVSLLLPKAFLSRG) form the signal peptide. The tract at residues 30-67 (RGKRPEPPPGPEGKLDRFPPMMHHHSAPSDGQTPGARF) is disordered. The Lumenal portion of the chain corresponds to 32 to 95 (KRPEPPPGPE…AGGGGSGRGL (64 aa)). A helical membrane pass occupies residues 96-116 (MGQIIPIYGFGIFLYILYILF). Over 117–367 (KLSKGKTAED…LRKRNPQGFE (251 aa)) the chain is Cytoplasmic. Residues 138 to 169 (HRKITNFELVQLQEKLKETEEAMEKLINRVGP) are a coiled coil. Lys201 is subject to N6-acetyllysine; alternate. A Glycyl lysine isopeptide (Lys-Gly) (interchain with G-Cter in ubiquitin); alternate cross-link involves residue Lys201. Disordered regions lie at residues 262–301 (QMGEIEEEGSERLSWDHLPTDPGAQKDNSVAPCDPKPESC) and 322–367 (ADGY…QGFE). Basic and acidic residues predominate over residues 271-280 (SERLSWDHLP). A compositionally biased stretch (basic residues) spans 358-367 (LRKRNPQGFE).

It belongs to the ric-3 family. As to quaternary structure, monomer and homodimer. Interacts with CHRNA7, CHRNA3, CHRNA4, CHRNB2, CHRNB4 and HTR3A. Expressed in brain, with highest levels in hippocampus, cerebellum and superior colliculus.

It is found in the endoplasmic reticulum membrane. Molecular chaperone which promotes the proper subunit assembly and surface trafficking of alpha-7 (CHRNA7) nicotinic acetylcholine receptor. Promotes the proper subunit assembly and cell surface expression of alpha-8 (CHRNA8) nicotinic acetylcholine receptor. May also promote functional expression of homomeric serotoninergic 5-HT3 receptors, and of heteromeric acetylcholine receptors alpha-3/beta-2, alpha-3/beta-4, alpha-4/beta-2 and alpha-4/beta-4. This is Protein RIC-3 (Ric3) from Mus musculus (Mouse).